The sequence spans 470 residues: Sorting nexin-17 (470 aa).

Residues 1-109 (MHFSIPETES…SFLRRAQQET (109 aa)) enclose the PX domain. Arginine 36, serine 38, lysine 62, and arginine 75 together coordinate a 1,2-diacyl-sn-glycero-3-phospho-(1D-myo-inositol-3-phosphate). The region spanning 115 to 206 (EEVSLEVLLS…YKIVLRKSYW (92 aa)) is the Ras-associating domain. The tract at residues 115-432 (EEVSLEVLLS…DASRESMVKL (318 aa)) is FERM-like. A PTB-like F3 module region spans residues 270–432 (GYLRFDACVA…DASRESMVKL (163 aa)). Residues 401-425 (GGNLRRSDSQQAVKSPPLLESPDAS) form a disordered region. Residues serine 407, serine 409, serine 415, serine 421, serine 437, and serine 440 each carry the phosphoserine modification.

It belongs to the sorting nexin family. In terms of assembly, monomer. Interacts with APP (via cytoplasmic YXNPXY motif). Interacts with KIF1B. Interacts with the C-termini of P-selectin, PTC, LDLR, VLDLR, LRP1 and LRP8. Interacts with KRIT1 (via N-terminus). Interacts with HRAS. Interacts with ITGB1 and ITGB5 (via NPxY motif). Interacts with CCDC22 and CCDC93; the interaction associates SNX17 with the CCC complex. Interacts (via C-terminus) with VPS26C and VPS35L; the interactions are direct and associate SNX17 with the retriever complex.

It localises to the cytoplasm. The protein localises to the early endosome. The protein resides in the cytoplasmic vesicle membrane. Its function is as follows. Critical regulator of endosomal recycling of numerous surface proteins, including integrins, signaling receptor and channels. Binds to NPxY sequences in the cytoplasmic tails of target cargos. Associates with retriever and CCC complexes to prevent lysosomal degradation and promote cell surface recycling of numerous cargos such as integrins ITGB1, ITGB5 and their associated alpha subunits. Also required for maintenance of normal cell surface levels of APP and LRP1. Interacts with membranes containing phosphatidylinositol 3-phosphate (PtdIns(3P)). The chain is Sorting nexin-17 (Snx17) from Rattus norvegicus (Rat).